The primary structure comprises 302 residues: 4-hydroxy-tetrahydrodipicolinate synthase (302 aa).

Pyruvate is bound at residue threonine 44. Tyrosine 132 serves as the catalytic Proton donor/acceptor. The active-site Schiff-base intermediate with substrate is lysine 160. Valine 202 serves as a coordination point for pyruvate.

The protein belongs to the DapA family. In terms of assembly, homotetramer; dimer of dimers.

It is found in the cytoplasm. It carries out the reaction L-aspartate 4-semialdehyde + pyruvate = (2S,4S)-4-hydroxy-2,3,4,5-tetrahydrodipicolinate + H2O + H(+). It functions in the pathway amino-acid biosynthesis; L-lysine biosynthesis via DAP pathway; (S)-tetrahydrodipicolinate from L-aspartate: step 3/4. Catalyzes the condensation of (S)-aspartate-beta-semialdehyde [(S)-ASA] and pyruvate to 4-hydroxy-tetrahydrodipicolinate (HTPA). The chain is 4-hydroxy-tetrahydrodipicolinate synthase from Thermomicrobium roseum (strain ATCC 27502 / DSM 5159 / P-2).